We begin with the raw amino-acid sequence, 123 residues long: Integration host factor subunit alpha (123 aa).

The disordered stretch occupies residues 97 to 123 (NANGSAPSMSSSASAVDDDKSESASRT). Over residues 98-111 (ANGSAPSMSSSASA) the composition is skewed to low complexity. The span at 113 to 123 (DDDKSESASRT) shows a compositional bias: basic and acidic residues.

This sequence belongs to the bacterial histone-like protein family. In terms of assembly, heterodimer of an alpha and a beta chain.

In terms of biological role, this protein is one of the two subunits of integration host factor, a specific DNA-binding protein that functions in genetic recombination as well as in transcriptional and translational control. The polypeptide is Integration host factor subunit alpha (Rhodopseudomonas palustris (strain BisB5)).